Consider the following 75-residue polypeptide: Pro-glucagon (75 aa).

This sequence belongs to the glucagon family.

The protein localises to the secreted. Plays a key role in glucose metabolism and homeostasis. Regulates blood glucose by increasing gluconeogenesis and decreasing glycolysis. The chain is Pro-glucagon (gcg) from Amia calva (Bowfin).